The following is a 384-amino-acid chain: tRNA(Met) cytidine acetate ligase (384 aa).

ATP is bound by residues 7–20 (VAEY…HEFL), glycine 101, asparagine 153, and arginine 178.

It belongs to the TmcAL family.

Its subcellular location is the cytoplasm. The catalysed reaction is cytidine(34) in elongator tRNA(Met) + acetate + ATP = N(4)-acetylcytidine(34) in elongator tRNA(Met) + AMP + diphosphate. In terms of biological role, catalyzes the formation of N(4)-acetylcytidine (ac(4)C) at the wobble position of elongator tRNA(Met), using acetate and ATP as substrates. First activates an acetate ion to form acetyladenylate (Ac-AMP) and then transfers the acetyl group to tRNA to form ac(4)C34. This chain is tRNA(Met) cytidine acetate ligase, found in Lactobacillus delbrueckii subsp. bulgaricus (strain ATCC BAA-365 / Lb-18).